The sequence spans 372 residues: 4-hydroxy-3-methylbut-2-en-1-yl diphosphate synthase (flavodoxin) (372 aa).

[4Fe-4S] cluster contacts are provided by Cys270, Cys273, Cys305, and Glu312.

The protein belongs to the IspG family. [4Fe-4S] cluster is required as a cofactor.

It catalyses the reaction (2E)-4-hydroxy-3-methylbut-2-enyl diphosphate + oxidized [flavodoxin] + H2O + 2 H(+) = 2-C-methyl-D-erythritol 2,4-cyclic diphosphate + reduced [flavodoxin]. It functions in the pathway isoprenoid biosynthesis; isopentenyl diphosphate biosynthesis via DXP pathway; isopentenyl diphosphate from 1-deoxy-D-xylulose 5-phosphate: step 5/6. In terms of biological role, converts 2C-methyl-D-erythritol 2,4-cyclodiphosphate (ME-2,4cPP) into 1-hydroxy-2-methyl-2-(E)-butenyl 4-diphosphate. The protein is 4-hydroxy-3-methylbut-2-en-1-yl diphosphate synthase (flavodoxin) of Shigella dysenteriae serotype 1 (strain Sd197).